The chain runs to 256 residues: Ribosomal RNA small subunit methyltransferase J (256 aa).

S-adenosyl-L-methionine contacts are provided by residues 101–102 (RD), 117–118 (ER), and aspartate 174.

It belongs to the methyltransferase superfamily. RsmJ family.

It localises to the cytoplasm. The enzyme catalyses guanosine(1516) in 16S rRNA + S-adenosyl-L-methionine = N(2)-methylguanosine(1516) in 16S rRNA + S-adenosyl-L-homocysteine + H(+). Its function is as follows. Specifically methylates the guanosine in position 1516 of 16S rRNA. The chain is Ribosomal RNA small subunit methyltransferase J from Chromohalobacter salexigens (strain ATCC BAA-138 / DSM 3043 / CIP 106854 / NCIMB 13768 / 1H11).